The chain runs to 340 residues: MIFVDACFGKETEYTPVWMMRQAGRYLPEYMEVRRKIGNFLDMTRNPEVVAEVTIQPIDILDVDAAILFSDILNLPMEMGLPLRFEKGVGPVFDKTIDTEEDIEALDSSADEKLEYVYKGVKLIRERLPEEKALIGFAGSPWTIATYMVEGRGSKQYAKIKKMVYSNPMMLHRLLAFNTKETIEYLSKQIDAGANAVMVFDSWGGALEKEKFFEFSWNYMKEIAKNIKAKYPHIPVILFSKGVGLYMDEMDGEFDVVGVDWATPIDHALRIFKDNYTLQGNMEPTRLYSKTATKEAVEKIAGIMKGHRHIFNLGHGILPDVPVENAKYFVNLCKELTRRG.

Substrate is bound by residues 21 to 25 (RQAGR), D71, Y147, S202, and H315.

The protein belongs to the uroporphyrinogen decarboxylase family. As to quaternary structure, homodimer.

Its subcellular location is the cytoplasm. It catalyses the reaction uroporphyrinogen III + 4 H(+) = coproporphyrinogen III + 4 CO2. It participates in porphyrin-containing compound metabolism; protoporphyrin-IX biosynthesis; coproporphyrinogen-III from 5-aminolevulinate: step 4/4. Functionally, catalyzes the decarboxylation of four acetate groups of uroporphyrinogen-III to yield coproporphyrinogen-III. This chain is Uroporphyrinogen decarboxylase, found in Nautilia profundicola (strain ATCC BAA-1463 / DSM 18972 / AmH).